The chain runs to 342 residues: Spermidine synthase (342 aa).

Residues 9 to 42 (MKGTELPVKRPREEEAETEMEAANNSNNGCEKEE) are disordered. The region spanning 52-289 (PGWFSEISPL…GMIGFMLCST (238 aa)) is the PABS domain. S-adenosyl 3-(methylsulfanyl)propylamine is bound at residue glutamine 83. Tyrosine 113 provides a ligand contact to putrescine. S-adenosyl 3-(methylsulfanyl)propylamine contacts are provided by residues glutamine 114, aspartate 138, glutamate 158, 189–190 (DG), and aspartate 208. Aspartate 208 acts as the Proton acceptor in catalysis. Residues 208–211 (DSSD) and tyrosine 277 contribute to the putrescine site.

The protein belongs to the spermidine/spermine synthase family.

The enzyme catalyses S-adenosyl 3-(methylsulfanyl)propylamine + putrescine = S-methyl-5'-thioadenosine + spermidine + H(+). It functions in the pathway amine and polyamine biosynthesis; spermidine biosynthesis; spermidine from putrescine: step 1/1. This is Spermidine synthase (SPDSYN) from Solanum lycopersicum (Tomato).